Consider the following 198-residue polypeptide: Proteasome subunit beta type-4 (198 aa).

Residue M1 is modified to N-acetylmethionine. Position 76 is a phosphoserine (S76).

It belongs to the peptidase T1B family. In terms of assembly, the 26S proteasome consists of a 20S proteasome core and two 19S regulatory subunits. The 20S proteasome core is composed of 28 subunits that are arranged in four stacked rings, resulting in a barrel-shaped structure. The two end rings are each formed by seven alpha subunits, and the two central rings are each formed by seven beta subunits. The catalytic chamber with the active sites is on the inside of the barrel.

The protein localises to the cytoplasm. Its subcellular location is the nucleus. Functionally, non-catalytic component of the proteasome which degrades poly-ubiquitinated proteins in the cytoplasm and in the nucleus. It is essential for the regulated turnover of proteins and for the removal of misfolded proteins. The proteasome is a multicatalytic proteinase complex that is characterized by its ability to cleave peptides with Arg, Phe, Tyr, Leu, and Glu adjacent to the leaving group at neutral or slightly basic pH. It has an ATP-dependent proteolytic activity. This subunit has a chymotrypsin-like activity. The protein is Proteasome subunit beta type-4 (PRE1) of Saccharomyces cerevisiae (strain ATCC 204508 / S288c) (Baker's yeast).